A 140-amino-acid chain; its full sequence is Ribosome maturation factor RimP (140 aa).

It belongs to the RimP family.

The protein localises to the cytoplasm. Its function is as follows. Required for maturation of 30S ribosomal subunits. This Campylobacter jejuni subsp. jejuni serotype O:23/36 (strain 81-176) protein is Ribosome maturation factor RimP.